The primary structure comprises 558 residues: Sinalpyl alcohol oxidase Nec3 (558 aa).

Positions 1 to 28 (MATMAILQRTFSFILIFSIALHLKSLFA) are cleaved as a signal peptide. 64 to 65 (TA) is an FAD binding site. N76 carries N-linked (GlcNAc...) asparagine glycosylation. FAD-binding positions include 83–84 (ER), V131, S135, and 139–142 (NFGF). N180 carries an N-linked (GlcNAc...) asparagine glycan. V247 contacts FAD. N-linked (GlcNAc...) asparagine glycosylation is found at N308, N386, and N473. C433 and C484 are disulfide-bonded. 492-493 (YH) provides a ligand contact to FAD. H493 acts as the Proton donor in catalysis. Residue N531 is the Proton acceptor of the active site. 532–533 (PQ) provides a ligand contact to FAD.

The protein belongs to the GMC oxidoreductase family. As to quaternary structure, monomer. The cofactor is FAD. Confined to nectaries.

It carries out the reaction (E)-sinapyl alcohol + O2 = (E)-sinapaldehyde + H2O2. It participates in alkaloid biosynthesis. In terms of biological role, involved in the production of blood-red nectar containing the alkaloid nesocodin and that serves as a visual attractant for pollinator visitation, including vertebrates such as Phelsuma geckos. The nectar is initially acidic and pale yellow, but slowly becomes alkaline before turning into red within 24 hours. Together with NEC1 and NEC2, facilitates the condensation of sinapaldehyde ((E)-3,5-dimethoxy-4-hydroxycinnamaldehyde) and proline to form nesocodin, a pigment with a stable imine bond. Catalyzes the conversion of sinapyl alcohol to sinapaldehyde. The protein is Sinalpyl alcohol oxidase Nec3 of Nesocodon mauritianus (Blue Mauritius bellflower).